Here is a 315-residue protein sequence, read N- to C-terminus: 4-hydroxy-3-methylbut-2-enyl diphosphate reductase (315 aa).

A [4Fe-4S] cluster-binding site is contributed by Cys-12. (2E)-4-hydroxy-3-methylbut-2-enyl diphosphate is bound by residues His-41 and His-74. The dimethylallyl diphosphate site is built by His-41 and His-74. Isopentenyl diphosphate-binding residues include His-41 and His-74. Cys-96 contributes to the [4Fe-4S] cluster binding site. His-124 lines the (2E)-4-hydroxy-3-methylbut-2-enyl diphosphate pocket. Residue His-124 coordinates dimethylallyl diphosphate. Position 124 (His-124) interacts with isopentenyl diphosphate. Glu-126 acts as the Proton donor in catalysis. Thr-168 contributes to the (2E)-4-hydroxy-3-methylbut-2-enyl diphosphate binding site. Residue Cys-198 coordinates [4Fe-4S] cluster. (2E)-4-hydroxy-3-methylbut-2-enyl diphosphate contacts are provided by Ser-226, Ser-227, Asn-228, and Ser-270. 4 residues coordinate dimethylallyl diphosphate: Ser-226, Ser-227, Asn-228, and Ser-270. 4 residues coordinate isopentenyl diphosphate: Ser-226, Ser-227, Asn-228, and Ser-270.

It belongs to the IspH family. The cofactor is [4Fe-4S] cluster.

It catalyses the reaction isopentenyl diphosphate + 2 oxidized [2Fe-2S]-[ferredoxin] + H2O = (2E)-4-hydroxy-3-methylbut-2-enyl diphosphate + 2 reduced [2Fe-2S]-[ferredoxin] + 2 H(+). The enzyme catalyses dimethylallyl diphosphate + 2 oxidized [2Fe-2S]-[ferredoxin] + H2O = (2E)-4-hydroxy-3-methylbut-2-enyl diphosphate + 2 reduced [2Fe-2S]-[ferredoxin] + 2 H(+). The protein operates within isoprenoid biosynthesis; dimethylallyl diphosphate biosynthesis; dimethylallyl diphosphate from (2E)-4-hydroxy-3-methylbutenyl diphosphate: step 1/1. Its pathway is isoprenoid biosynthesis; isopentenyl diphosphate biosynthesis via DXP pathway; isopentenyl diphosphate from 1-deoxy-D-xylulose 5-phosphate: step 6/6. Its function is as follows. Catalyzes the conversion of 1-hydroxy-2-methyl-2-(E)-butenyl 4-diphosphate (HMBPP) into a mixture of isopentenyl diphosphate (IPP) and dimethylallyl diphosphate (DMAPP). Acts in the terminal step of the DOXP/MEP pathway for isoprenoid precursor biosynthesis. The protein is 4-hydroxy-3-methylbut-2-enyl diphosphate reductase of Pseudomonas entomophila (strain L48).